Consider the following 234-residue polypeptide: uncharacterized protein (234 aa).

Residues 199-234 (DNQNEPLENYSDDNNFSNFDETEHVDDSEMNDDNFI) are disordered.

This is an uncharacterized protein from Buchnera aphidicola subsp. Schizaphis graminum (strain Sg).